We begin with the raw amino-acid sequence, 706 residues long: MARDYPLERYRNFGIMAHIDAGKTTCSERILYYTGKSHNIGEVHDGAATMDWMEQEQERGITITSAATTTFWERTENGTEPDSEKHRLNIIDTPGHVDFTIEVERSLAVLDGAVCVLDANAGVEPQTETVWRQADRYKVPRMVFVNKMDKIGADFFNCVRMIEDRTGARAVPVGIPIGAETELEGLIDLVTMEEWLWQGEDLGASWIKAPIRDSLNDMALEWRAKMIEAAVEMDDDAMENYLMDGAEPDVPTLRALLRKGTLAMAFVPVLGGSAFKNKGVQPLLNAVIDYLPSPLDVVDYMGFKPGDETETRNIPRRADDDMAFSGLAFKIMNDPFVGSLTFVRIYSGQLRKGDNMINSTKQNNERVGRMMMMHSNNREEIDEAFAGDIIALGGLKNTTTGDTLCDKSDPVVLETMTFPEPVIEIAVEPKTKADQEKMAMALQRLSAEDPSFRVETDIESGQTIMRGMGELHLDILVDRMKREFKVEANIGAPQVAYRETIGHEVEHTYTHKKQSGGSGQYAEVKLLITPTEPGEGYSFESKIVGGAVPKEYIPGVEKGIKSVMDSGPLAGFPVIDFKVQLLDGKFHDVDSSVLAFEIAGRMGMREGMRKAGAKLLEPIMKVEVITPEDYTGGIIGDLTSRRGQVQGQDTRGNAIAIDAFVPLANMFGYINTLRSMSSGRAQFTMQFDHYEPVPQNISDEIQAKYA.

Residues 8-295 (ERYRNFGIMA…AVIDYLPSPL (288 aa)) form the tr-type G domain. Residues 17–24 (AHIDAGKT), 92–96 (DTPGH), and 146–149 (NKMD) each bind GTP.

It belongs to the TRAFAC class translation factor GTPase superfamily. Classic translation factor GTPase family. EF-G/EF-2 subfamily.

It localises to the cytoplasm. Functionally, catalyzes the GTP-dependent ribosomal translocation step during translation elongation. During this step, the ribosome changes from the pre-translocational (PRE) to the post-translocational (POST) state as the newly formed A-site-bound peptidyl-tRNA and P-site-bound deacylated tRNA move to the P and E sites, respectively. Catalyzes the coordinated movement of the two tRNA molecules, the mRNA and conformational changes in the ribosome. The polypeptide is Elongation factor G (Jannaschia sp. (strain CCS1)).